The chain runs to 434 residues: uncharacterized protein (434 aa).

The TRAM domain occupies 4-62 (LLTIHTQVEGEITALAFGGAGILRYHGFVIFVPFTAPGDQIICRIIEIKKSFAVAELVK). [4Fe-4S] cluster is bound by residues C75, C81, C84, and C161. Residues Q266, Y295, E316, and N364 each coordinate S-adenosyl-L-methionine. C391 (nucleophile) is an active-site residue.

The protein belongs to the class I-like SAM-binding methyltransferase superfamily. RNA M5U methyltransferase family.

This is an uncharacterized protein from Protochlamydia amoebophila (strain UWE25).